The chain runs to 122 residues: Small ribosomal subunit protein uS13 (122 aa).

The disordered stretch occupies residues 92–122; the sequence is HRRGLPVRGQRTHTNARTRKGPAKPIAGKKK.

This sequence belongs to the universal ribosomal protein uS13 family. As to quaternary structure, part of the 30S ribosomal subunit. Forms a loose heterodimer with protein S19. Forms two bridges to the 50S subunit in the 70S ribosome.

Its function is as follows. Located at the top of the head of the 30S subunit, it contacts several helices of the 16S rRNA. In the 70S ribosome it contacts the 23S rRNA (bridge B1a) and protein L5 of the 50S subunit (bridge B1b), connecting the 2 subunits; these bridges are implicated in subunit movement. Contacts the tRNAs in the A and P-sites. The chain is Small ribosomal subunit protein uS13 from Paracoccus denitrificans (strain Pd 1222).